Reading from the N-terminus, the 182-residue chain is Fimbrial subunit type 1 (182 aa).

The first 23 residues, 1-23, serve as a signal peptide directing secretion; it reads MKIKTLAIVVLSALSLSSAAALA. Cysteines 44 and 84 form a disulfide.

The protein belongs to the fimbrial protein family.

Its subcellular location is the fimbrium. This chain is Fimbrial subunit type 1, found in Klebsiella pneumoniae.